The following is a 77-amino-acid chain: U14-theraphotoxin-Cg1c (77 aa).

Positions 1–21 (MNTSDPPAVLRIAAITLLCTA) are cleaved as a signal peptide. Positions 22–49 (SESVEQNPLIPFENAVLGSYAKMASEKR) are excised as a propeptide. 2 disulfide bridges follow: cysteine 50/cysteine 64 and cysteine 57/cysteine 69.

This sequence belongs to the neurotoxin 10 (Hwtx-1) family. 65 (Jztx-21) subfamily. Expressed by the venom gland.

Its subcellular location is the secreted. Probable ion channel inhibitor. The chain is U14-theraphotoxin-Cg1c from Chilobrachys guangxiensis (Chinese earth tiger tarantula).